Consider the following 539-residue polypeptide: CTP synthase (539 aa).

Residues 1-268 form an amidoligase domain region; it reads MSFKSIFLTG…SDFLLNKLGF (268 aa). Serine 14 contributes to the CTP binding site. Serine 14 is a UTP binding site. 15–20 contacts ATP; it reads SLGKGL. L-glutamine is bound at residue tyrosine 55. Aspartate 72 is an ATP binding site. Positions 72 and 142 each coordinate Mg(2+). CTP is bound by residues 149 to 151, 188 to 193, and lysine 224; these read DIE and KTKPTQ. Residues 188–193 and lysine 224 each bind UTP; that span reads KTKPTQ. Leucine 242 lines the ATP pocket. The region spanning 294–532 is the Glutamine amidotransferase type-1 domain; that stretch reads RIGLVGKYLE…IRAAKAYSLE (239 aa). Residue glycine 353 participates in L-glutamine binding. The Nucleophile; for glutamine hydrolysis role is filled by cysteine 380. L-glutamine-binding positions include 381–384, glutamate 404, and arginine 460; that span reads LGMQ. Catalysis depends on residues histidine 505 and glutamate 507.

This sequence belongs to the CTP synthase family. Homotetramer.

The enzyme catalyses UTP + L-glutamine + ATP + H2O = CTP + L-glutamate + ADP + phosphate + 2 H(+). The catalysed reaction is L-glutamine + H2O = L-glutamate + NH4(+). It catalyses the reaction UTP + NH4(+) + ATP = CTP + ADP + phosphate + 2 H(+). The protein operates within pyrimidine metabolism; CTP biosynthesis via de novo pathway; CTP from UDP: step 2/2. Allosterically activated by GTP, when glutamine is the substrate; GTP has no effect on the reaction when ammonia is the substrate. The allosteric effector GTP functions by stabilizing the protein conformation that binds the tetrahedral intermediate(s) formed during glutamine hydrolysis. Inhibited by the product CTP, via allosteric rather than competitive inhibition. Its function is as follows. Catalyzes the ATP-dependent amination of UTP to CTP with either L-glutamine or ammonia as the source of nitrogen. May be involved in lipopolysaccharide biosynthesis, potentially channelling CTP directly to CMP-KDO synthetase. Regulates intracellular CTP levels through interactions with the four ribonucleotide triphosphates. The sequence is that of CTP synthase from Chlamydia trachomatis serovar D (strain ATCC VR-885 / DSM 19411 / UW-3/Cx).